The sequence spans 81 residues: Large ribosomal subunit protein bL31 (81 aa).

Cys16, Cys18, Cys38, and Cys41 together coordinate Zn(2+).

This sequence belongs to the bacterial ribosomal protein bL31 family. Type A subfamily. Part of the 50S ribosomal subunit. It depends on Zn(2+) as a cofactor.

In terms of biological role, binds the 23S rRNA. The sequence is that of Large ribosomal subunit protein bL31 from Mycobacterium marinum (strain ATCC BAA-535 / M).